Consider the following 187-residue polypeptide: Insulin-like growth factor 2 (187 aa).

The N-terminal stretch at 1-23 (MCAARQILLLLLAFLAYALDSAA) is a signal peptide. The b stretch occupies residues 25-51 (YGTAETLCGGELVDTLQFVCGDRGFYF). Disulfide bonds link C32-C71, C44-C84, and C70-C75. The tract at residues 52 to 64 (SRPVGRNNRRINR) is c. The tract at residues 64-85 (RGIVEECCFRSCDLALLETYCA) is a. The tract at residues 86-91 (KSVKSE) is d. The propeptide at 92-187 (RDLSATSLAG…ASPEATGPQE (96 aa)) is e peptide. Residues 162–187 (HRPLISLPSQRPPAPRASPEATGPQE) form a disordered region.

This sequence belongs to the insulin family.

It is found in the secreted. Its function is as follows. The insulin-like growth factors, isolated from plasma, are structurally and functionally related to insulin but have a much higher growth-promoting activity. Acts as a ligand for integrin which is required for IGF2 signaling. The chain is Insulin-like growth factor 2 from Gallus gallus (Chicken).